We begin with the raw amino-acid sequence, 406 residues long: Solanesyl diphosphate synthase 1, chloroplastic (406 aa).

The N-terminal 71 residues, 1–71, are a transit peptide targeting the chloroplast; the sequence is MMTSCRNIDL…NGIGQSQTVS (71 aa). Isopentenyl diphosphate contacts are provided by K126, R129, and H164. Mg(2+) contacts are provided by D171 and D175. Residue R180 participates in an all-trans-polyprenyl diphosphate binding. R181 provides a ligand contact to isopentenyl diphosphate. Residues K257, T258, Q295, and K312 each contribute to the an all-trans-polyprenyl diphosphate site.

This sequence belongs to the FPP/GGPP synthase family. As to quaternary structure, homodimer. Interacts with FBN5. Mg(2+) serves as cofactor. In terms of tissue distribution, higher expression in leaves than in roots.

It localises to the plastid. The protein localises to the chloroplast. The catalysed reaction is 5 isopentenyl diphosphate + (2E,6E,10E)-geranylgeranyl diphosphate = all-trans-nonaprenyl diphosphate + 5 diphosphate. The enzyme catalyses isopentenyl diphosphate + (2E,6E)-farnesyl diphosphate = (2E,6E,10E)-geranylgeranyl diphosphate + diphosphate. Involved in providing solanesyl diphosphate for plastoquinone-9 (PQ-9) formation in plastids. Catalyzes the elongation of the prenyl side chain of PQ-9 in plastids. Contributes to the biosynthesis of plastochromanol-8 (PC-8) in plastids. Does not contribute to the synthesis of tocopherol or ubiquinone. PQ-9 and PC-8 are lipophilic antioxidants that act as protectant against photooxidative stress under high light stress conditions. Prefers geranylgeranyl diphosphate to farnesyl diphosphate as substrate. No activity with geranyl diphosphate or dimethylallyl diphosphate as substrate. The sequence is that of Solanesyl diphosphate synthase 1, chloroplastic from Arabidopsis thaliana (Mouse-ear cress).